The sequence spans 283 residues: Pantothenate synthetase (283 aa).

An ATP-binding site is contributed by 26 to 33 (MGNLHEGH). His-33 functions as the Proton donor in the catalytic mechanism. Residue Gln-57 coordinates (R)-pantoate. Gln-57 contributes to the beta-alanine binding site. ATP is bound at residue 144–147 (GKKD). Position 150 (Gln-150) interacts with (R)-pantoate. ATP-binding positions include Ile-173 and 181 to 184 (LSSR).

This sequence belongs to the pantothenate synthetase family. As to quaternary structure, homodimer.

Its subcellular location is the cytoplasm. The enzyme catalyses (R)-pantoate + beta-alanine + ATP = (R)-pantothenate + AMP + diphosphate + H(+). The protein operates within cofactor biosynthesis; (R)-pantothenate biosynthesis; (R)-pantothenate from (R)-pantoate and beta-alanine: step 1/1. Functionally, catalyzes the condensation of pantoate with beta-alanine in an ATP-dependent reaction via a pantoyl-adenylate intermediate. This is Pantothenate synthetase from Polynucleobacter necessarius subsp. necessarius (strain STIR1).